The primary structure comprises 1124 residues: PAN2-PAN3 deadenylation complex catalytic subunit PAN2 (1124 aa).

WD repeat units follow at residues 19 to 58 (IDNS…IPMP), 118 to 157 (PGFN…TTSF), 158 to 195 (NHTG…TVKS), and 309 to 348 (SSNT…SKNF). Residues 351-484 (FPSYLEQPDF…EYKLSNKFEV (134 aa)) form a linker region. Positions 484–861 (VPNCYSNLKI…KPIIVMYQLA (378 aa)) constitute a USP domain. The 175-residue stretch at 917 to 1091 (IAIDAEFVAL…EDANTALLLY (175 aa)) folds into the Exonuclease domain. Asp920, Glu922, Asp1030, and Asp1083 together coordinate a divalent metal cation.

This sequence belongs to the peptidase C19 family. PAN2 subfamily. In terms of assembly, forms a heterotrimer with an asymmetric homodimer of the regulatory subunit PAN3 to form the poly(A)-nuclease (PAN) deadenylation complex. A divalent metal cation serves as cofactor.

It is found in the cytoplasm. The catalysed reaction is Exonucleolytic cleavage of poly(A) to 5'-AMP.. Positively regulated by the regulatory subunit PAN3. Its function is as follows. Catalytic subunit of the poly(A)-nuclease (PAN) deadenylation complex, one of two cytoplasmic mRNA deadenylases involved in mRNA turnover. PAN specifically shortens poly(A) tails of RNA and the activity is stimulated by poly(A)-binding protein PAB1. PAN deadenylation is followed by rapid degradation of the shortened mRNA tails by the CCR4-NOT complex. Deadenylated mRNAs are then degraded by two alternative mechanisms, namely exosome-mediated 3'-5' exonucleolytic degradation, or deadenylation-dependent mRNA decaping and subsequent 5'-3' exonucleolytic degradation by XRN1. May also be involved in post-transcriptional maturation of mRNA poly(A) tails. The protein is PAN2-PAN3 deadenylation complex catalytic subunit PAN2 of Debaryomyces hansenii (strain ATCC 36239 / CBS 767 / BCRC 21394 / JCM 1990 / NBRC 0083 / IGC 2968) (Yeast).